Reading from the N-terminus, the 58-residue chain is UPF0391 membrane protein Maqu_2901 (58 aa).

The next 2 membrane-spanning stretches (helical) occupy residues 4-24 (WAIV…GGIA) and 28-48 (AGFA…SLVV).

The protein belongs to the UPF0391 family.

It is found in the cell membrane. The chain is UPF0391 membrane protein Maqu_2901 from Marinobacter nauticus (strain ATCC 700491 / DSM 11845 / VT8) (Marinobacter aquaeolei).